The following is a 388-amino-acid chain: Alpha-2A adrenergic receptor (388 aa).

At 1–22 (MICGANATNGTNATKEYTLLVA) the chain is on the extracellular side. N-linked (GlcNAc...) asparagine glycans are attached at residues asparagine 6, asparagine 9, and asparagine 12. Residues 23–48 (LPLSIAVGLLILLIIFGNVLVIIAVF) traverse the membrane as a helical segment. Residues 49-59 (TSRALRAPQNL) are Cytoplasmic-facing. Residues 60-85 (FLVSLASADILVATLVMPFSLANELM) form a helical membrane-spanning segment. At 86–95 (GMWTFGGVWC) the chain is on the extracellular side. A disulfide bridge connects residues cysteine 95 and cysteine 169. A helical membrane pass occupies residues 96-118 (EIYLALDVLFCTASITHLCAISL). Residues 119–138 (DRYWSITQAIEYNLKRTPQR) lie on the Cytoplasmic side of the membrane. A helical transmembrane segment spans residues 139 to 162 (IKRIIFIVWIIAAVISCPPLITMK). Topologically, residues 163–173 (KSEGDICDINK) are extracellular. Residues 174–198 (EKWYIVSSCIGSFFLPCIIMVLVYI) traverse the membrane as a helical segment. Residues 199–311 (RIYQIAKKRT…RQNREKRFTF (113 aa)) lie on the Cytoplasmic side of the membrane. The segment at 208–291 (TRAPPGDHRK…PGDGDKTEAC (84 aa)) is disordered. The span at 212-231 (PGDHRKNEVGKKENDPHEKL) shows a compositional bias: basic and acidic residues. Basic residues predominate over residues 266–275 (LKKKSSKGKT). Residues 312 to 337 (VLAVVIGVFVICWFPFFFTYTFTAFC) traverse the membrane as a helical segment. The Extracellular portion of the chain corresponds to 338 to 344 (DCCVPET). Residues 345–368 (LFKFFFWFGYCNSSLNPIIYTIFN) traverse the membrane as a helical segment. Over 369-388 (NDFRRSFKKILCRRDKRRVV) the chain is Cytoplasmic. A lipid anchor (S-palmitoyl cysteine) is attached at cysteine 380.

Belongs to the G-protein coupled receptor 1 family. Adrenergic receptor subfamily. ADRA2A sub-subfamily.

Its subcellular location is the cell membrane. In terms of biological role, alpha-2 adrenergic receptors mediate the catecholamine-induced inhibition of adenylate cyclase through the action of G proteins. The order of potency for this receptor is dexmedetomidine &gt; oxymetazoline = epinephrine &gt; norepinephrine. This Danio rerio (Zebrafish) protein is Alpha-2A adrenergic receptor.